Consider the following 382-residue polypeptide: Galactokinase (382 aa).

Position 34-37 (34-37 (EHTD)) interacts with substrate. 124–130 (GAGLSSS) lines the ATP pocket. Ser130 and Glu162 together coordinate Mg(2+). Residue Asp174 is the Proton acceptor of the active site. Tyr223 lines the substrate pocket.

The protein belongs to the GHMP kinase family. GalK subfamily.

The protein localises to the cytoplasm. The enzyme catalyses alpha-D-galactose + ATP = alpha-D-galactose 1-phosphate + ADP + H(+). The protein operates within carbohydrate metabolism; galactose metabolism. Its function is as follows. Catalyzes the transfer of the gamma-phosphate of ATP to D-galactose to form alpha-D-galactose-1-phosphate (Gal-1-P). The chain is Galactokinase from Escherichia coli O17:K52:H18 (strain UMN026 / ExPEC).